The sequence spans 206 residues: 3-demethoxyubiquinol 3-hydroxylase (206 aa).

The Fe cation site is built by Glu-55, Glu-85, His-88, Glu-137, Glu-169, and His-172.

The protein belongs to the COQ7 family. It depends on Fe cation as a cofactor.

The protein localises to the cell membrane. It carries out the reaction a 5-methoxy-2-methyl-3-(all-trans-polyprenyl)benzene-1,4-diol + AH2 + O2 = a 3-demethylubiquinol + A + H2O. The protein operates within cofactor biosynthesis; ubiquinone biosynthesis. Its function is as follows. Catalyzes the hydroxylation of 2-nonaprenyl-3-methyl-6-methoxy-1,4-benzoquinol during ubiquinone biosynthesis. The protein is 3-demethoxyubiquinol 3-hydroxylase of Laribacter hongkongensis (strain HLHK9).